A 253-amino-acid polypeptide reads, in one-letter code: ATP synthase subunit a (253 aa).

6 helical membrane-spanning segments follow: residues 34–54 (SSLFLIIAVFLLLFWTSLSFY), 89–109 (YFPFIFTLHLLLLYCNLIGMI), 118–138 (HIVFTFGLALSIFIGINLIGI), 156–178 (LAIVPLLITIEFLSYIVKVFTLS), 203–223 (LSAGGLLAIFHLIPLALLLAL), and 226–246 (LELAIAGLQAYVFTLLTCIYL).

This sequence belongs to the ATPase A chain family. F-type ATPases have 2 components, CF(1) - the catalytic core - and CF(0) - the membrane proton channel. CF(1) has five subunits: alpha(3), beta(3), gamma(1), delta(1), epsilon(1). CF(0) has three main subunits: a, b and c.

It is found in the mitochondrion inner membrane. Functionally, mitochondrial membrane ATP synthase (F(1)F(0) ATP synthase or Complex V) produces ATP from ADP in the presence of a proton gradient across the membrane which is generated by electron transport complexes of the respiratory chain. F-type ATPases consist of two structural domains, F(1) - containing the extramembraneous catalytic core and F(0) - containing the membrane proton channel, linked together by a central stalk and a peripheral stalk. During catalysis, ATP synthesis in the catalytic domain of F(1) is coupled via a rotary mechanism of the central stalk subunits to proton translocation. Key component of the proton channel; it may play a direct role in the translocation of protons across the membrane. The polypeptide is ATP synthase subunit a (ATP6) (Chondrus crispus (Carrageen Irish moss)).